The following is an 842-amino-acid chain: Translation initiation factor IF-2 (842 aa).

Residues Thr121 to Val144 form a disordered region. The tr-type G domain occupies Pro340–Lys510. Residues Gly349 to Thr356 are G1. Gly349–Thr356 is a GTP binding site. The tract at residues Gly374–His378 is G2. Residues Asp396 to Gly399 form a G3 region. Residues Asp396–His400 and Asn450–Asp453 each bind GTP. Residues Asn450–Asp453 are G4. Residues Ser486 to Lys488 form a G5 region.

Belongs to the TRAFAC class translation factor GTPase superfamily. Classic translation factor GTPase family. IF-2 subfamily.

It localises to the cytoplasm. Functionally, one of the essential components for the initiation of protein synthesis. Protects formylmethionyl-tRNA from spontaneous hydrolysis and promotes its binding to the 30S ribosomal subunits. Also involved in the hydrolysis of GTP during the formation of the 70S ribosomal complex. The protein is Translation initiation factor IF-2 of Ehrlichia chaffeensis (strain ATCC CRL-10679 / Arkansas).